Here is a 414-residue protein sequence, read N- to C-terminus: Transforming growth factor beta-2 proprotein (414 aa).

Positions 1 to 20 (MHYCVLSAFLLLHLVTVALS) are cleaved as a signal peptide. N-linked (GlcNAc...) asparagine glycosylation is found at Asn-72, Asn-140, and Asn-241. 4 cysteine pairs are disulfide-bonded: Cys-309-Cys-318, Cys-317-Cys-380, Cys-346-Cys-411, and Cys-350-Cys-413.

It belongs to the TGF-beta family. In terms of assembly, interacts with the serine proteases, HTRA1 and HTRA3. Interacts with ASPN. Interacts with MFAP5. As to quaternary structure, interacts with Transforming growth factor beta-2 (TGF-beta-2) chain; interaction is non-covalent and maintains (TGF-beta-2) in a latent state. Interacts with LRRC32/GARP; leading to regulate activation of TGF-beta-2. Interacts with NREP; the interaction results in a decrease in TGFB2 autoinduction. Transforming growth factor beta-2: Homodimer; disulfide-linked. Transforming growth factor beta-2: Interacts with TGF-beta receptors (TGFBR1 and TGFBR2), leading to signal transduction. Post-translationally, the precursor proprotein is cleaved in the Golgi apparatus to form Transforming growth factor beta-2 (TGF-beta-2) and Latency-associated peptide (LAP) chains, which remain non-covalently linked, rendering TGF-beta-2 inactive.

The protein resides in the secreted. It is found in the extracellular space. The protein localises to the extracellular matrix. Functionally, precursor of the Latency-associated peptide (LAP) and Transforming growth factor beta-2 (TGF-beta-2) chains, which constitute the regulatory and active subunit of TGF-beta-2, respectively. Its function is as follows. Required to maintain the Transforming growth factor beta-2 (TGF-beta-2) chain in a latent state during storage in extracellular matrix. Associates non-covalently with TGF-beta-2 and regulates its activation via interaction with 'milieu molecules', such as LTBP1 and LRRC32/GARP, that control activation of TGF-beta-2. Multifunctional protein that regulates various processes such as angiogenesis and heart development. Activation into mature form follows different steps: following cleavage of the proprotein in the Golgi apparatus, Latency-associated peptide (LAP) and Transforming growth factor beta-2 (TGF-beta-2) chains remain non-covalently linked rendering TGF-beta-2 inactive during storage in extracellular matrix. At the same time, LAP chain interacts with 'milieu molecules', such as LTBP1 and LRRC32/GARP, that control activation of TGF-beta-2 and maintain it in a latent state during storage in extracellular milieus. Once activated following release of LAP, TGF-beta-2 acts by binding to TGF-beta receptors (TGFBR1 and TGFBR2), which transduce signal. This Bos taurus (Bovine) protein is Transforming growth factor beta-2 proprotein (TGFB2).